Reading from the N-terminus, the 159-residue chain is Bacterial non-heme ferritin (159 aa).

The 145-residue stretch at 1 to 145 folds into the Ferritin-like diiron domain; sequence MISEKLQNAI…GIVDKIKRAG (145 aa). Positions 17, 50, 53, 94, and 127 each coordinate Fe cation.

The protein belongs to the ferritin family. Prokaryotic subfamily. As to quaternary structure, homooligomer of 24 subunits that assemble into a spherical protein shell (12 +/- 1 nM diameter) that can sequester at least 2000 iron atoms.

The enzyme catalyses 4 Fe(2+) + O2 + 6 H2O = 4 iron(III) oxide-hydroxide + 12 H(+). In terms of biological role, may alleviate iron toxicity in the presence of oxygen. In Bacteroides fragilis (strain 638R), this protein is Bacterial non-heme ferritin (ftnA).